Consider the following 338-residue polypeptide: Probable protein S-acyltransferase 1 (338 aa).

Transmembrane regions (helical) follow at residues aspartate 32 to isoleucine 52 and leucine 68 to serine 88. A DHHC domain is found at lysine 142–serine 192. Cysteine 172 acts as the S-palmitoyl cysteine intermediate in catalysis. 2 consecutive transmembrane segments (helical) span residues phenylalanine 186–tryptophan 206 and isoleucine 225–valine 245. The disordered stretch occupies residues phenylalanine 319–arginine 338. Residues glycine 320 to arginine 338 are compositionally biased toward basic and acidic residues.

Belongs to the DHHC palmitoyltransferase family.

The protein resides in the endosome membrane. The catalysed reaction is L-cysteinyl-[protein] + hexadecanoyl-CoA = S-hexadecanoyl-L-cysteinyl-[protein] + CoA. Functionally, palmitoyl acyltransferase. This chain is Probable protein S-acyltransferase 1 (PAT01), found in Arabidopsis thaliana (Mouse-ear cress).